The chain runs to 165 residues: Endoribonuclease YbeY (165 aa).

Positions 119, 123, and 129 each coordinate Zn(2+).

Belongs to the endoribonuclease YbeY family. Zn(2+) serves as cofactor.

It localises to the cytoplasm. In terms of biological role, single strand-specific metallo-endoribonuclease involved in late-stage 70S ribosome quality control and in maturation of the 3' terminus of the 16S rRNA. The protein is Endoribonuclease YbeY of Streptomyces griseus subsp. griseus (strain JCM 4626 / CBS 651.72 / NBRC 13350 / KCC S-0626 / ISP 5235).